Consider the following 183-residue polypeptide: ATP-dependent protease subunit HslV (183 aa).

Thr-12 is a catalytic residue. 3 residues coordinate Na(+): Ala-166, Cys-169, and Thr-172.

This sequence belongs to the peptidase T1B family. HslV subfamily. A double ring-shaped homohexamer of HslV is capped on each side by a ring-shaped HslU homohexamer. The assembly of the HslU/HslV complex is dependent on binding of ATP.

The protein resides in the cytoplasm. The catalysed reaction is ATP-dependent cleavage of peptide bonds with broad specificity.. Allosterically activated by HslU binding. Its function is as follows. Protease subunit of a proteasome-like degradation complex believed to be a general protein degrading machinery. This Afipia carboxidovorans (strain ATCC 49405 / DSM 1227 / KCTC 32145 / OM5) (Oligotropha carboxidovorans) protein is ATP-dependent protease subunit HslV.